The chain runs to 607 residues: Elongation factor 4 (607 aa).

In terms of domain architecture, tr-type G spans 11-193 (KKIRNFSIIA…QIVELVPPPT (183 aa)). Residues 23-28 (DHGKST) and 140-143 (NKID) each bind GTP.

This sequence belongs to the TRAFAC class translation factor GTPase superfamily. Classic translation factor GTPase family. LepA subfamily.

The protein resides in the cell membrane. It catalyses the reaction GTP + H2O = GDP + phosphate + H(+). Required for accurate and efficient protein synthesis under certain stress conditions. May act as a fidelity factor of the translation reaction, by catalyzing a one-codon backward translocation of tRNAs on improperly translocated ribosomes. Back-translocation proceeds from a post-translocation (POST) complex to a pre-translocation (PRE) complex, thus giving elongation factor G a second chance to translocate the tRNAs correctly. Binds to ribosomes in a GTP-dependent manner. This Exiguobacterium sp. (strain ATCC BAA-1283 / AT1b) protein is Elongation factor 4.